The following is a 523-amino-acid chain: MNMKKATIAATAGIAVTAFAAPTIASASTVVVEAGDTLWGIAQDNGTTVDALKKANKLTTDKIVPGQKLQVTEVASEKTEKSVSATWLNVRSGAGVDNSIVTSLKGGTKVTVESTEANGWNKITYGEGKTGYVNGKYLGNAVTSAPSATPEVKQEETTQAAPAQQTKTEVKQATPAATTEKDAVETKTTAPAVDTNATTHTVKSGDTIWALSVKYGASVQDLMSWNNLSSSSIYVGQNIAVKQSAAKNTAPKAEAKTEAPAAEKQTAAPVVKESTNTSTTTTVKKETTTEKQTSTTKAPAQAAKPAPAPAPTVNTNASSYTVKSGDTLGKIASTFGTTVSKIKALNGLTSDNLQVGDVLKVKGTVPATNTNTATAPTTNTNNNTSSSNTSTPSKNNNTNQSSSNSSSASAIIAEAQKHLGKAYSWGGNGPTTFDCSGFTSYVFAQSGITLPRTSGAQYASTTKVSESEAQPGDLVFFDYGSGIAHVGIYVGNGQMINAQDNGVKYDNIHGSGWGQYLVGFGRV.

A signal peptide spans 1 to 27 (MNMKKATIAATAGIAVTAFAAPTIASA). Residues 28-71 (STVVVEAGDTLWGIAQDNGTTVDALKKANKLTTDKIVPGQKLQV) enclose the LysM 1 domain. Residues 78 to 142 (KTEKSVSATW…VNGKYLGNAV (65 aa)) enclose the SH3b domain. Residues 146–188 (PSATPEVKQEETTQAAPAQQTKTEVKQATPAATTEKDAVETKT) form a disordered region. The span at 157 to 167 (TTQAAPAQQTK) shows a compositional bias: low complexity. The 44-residue stretch at 198–241 (TTHTVKSGDTIWALSVKYGASVQDLMSWNNLSSSSIYVGQNIAV) folds into the LysM 2 domain. Low complexity-rich tracts occupy residues 251-282 (PKAE…TTTT) and 290-318 (EKQT…TNAS). Disordered stretches follow at residues 251–323 (PKAE…YTVK) and 367–408 (ATNT…SSSA). The LysM 3 domain occupies 318–361 (SSYTVKSGDTLGKIASTFGTTVSKIKALNGLTSDNLQVGDVLKV). A NlpC/P60 domain is found at 405–523 (SSSASAIIAE…GQYLVGFGRV (119 aa)). Cysteine 435 (nucleophile) is an active-site residue. Residue histidine 485 is the Proton acceptor of the active site. The active site involves asparagine 497.

Belongs to the peptidase C40 family.

Its function is as follows. This major extracellular protein may be involved in the invasion of non-professional phagocytic cells by Listeria. This Listeria seeligeri protein is Probable endopeptidase p60 (iap).